Consider the following 76-residue polypeptide: MQLVLAAKYIGAGISTIGLLGAGIGIAIVFAALINGVSRNPSIKDTVFPMAILGFALSEATGLFCLMVSFLLLFGV.

Methionine 1 is modified (N-formylmethionine). The next 2 membrane-spanning stretches (helical) occupy residues 14-34 (ISTIGLLGAGIGIAIVFAALI) and 52-72 (ILGFALSEATGLFCLMVSFLL).

This sequence belongs to the ATPase C chain family. In terms of assembly, F-type ATPases have 2 components, CF(1) - the catalytic core - and CF(0) - the membrane proton channel. In yeast, the dimeric form of ATP synthase consists of 18 polypeptides: alpha, beta, gamma, delta, epsilon, 4 (B), 5 (OSCP), 6 (A), 8, 9 (C), d, E (Tim11), f, g, h, i, j and k.

It localises to the mitochondrion membrane. Its function is as follows. Mitochondrial membrane ATP synthase (F(1)F(0) ATP synthase or Complex V) produces ATP from ADP in the presence of a proton gradient across the membrane which is generated by electron transport complexes of the respiratory chain. F-type ATPases consist of two structural domains, F(1) - containing the extramembraneous catalytic core and F(0) - containing the membrane proton channel, linked together by a central stalk and a peripheral stalk. During catalysis, ATP synthesis in the catalytic domain of F(1) is coupled via a rotary mechanism of the central stalk subunits to proton translocation. Part of the complex F(0) domain. A homomeric c-ring of probably 10 subunits is part of the complex rotary element. This is ATP synthase subunit 9, mitochondrial (ATP9) from Saccharomyces paradoxus (Yeast).